A 208-amino-acid chain; its full sequence is Uridine kinase (208 aa).

Position 11-18 (G11–S18) interacts with ATP.

This sequence belongs to the uridine kinase family.

The protein resides in the cytoplasm. It carries out the reaction uridine + ATP = UMP + ADP + H(+). The enzyme catalyses cytidine + ATP = CMP + ADP + H(+). The protein operates within pyrimidine metabolism; CTP biosynthesis via salvage pathway; CTP from cytidine: step 1/3. It participates in pyrimidine metabolism; UMP biosynthesis via salvage pathway; UMP from uridine: step 1/1. This Alkaliphilus metalliredigens (strain QYMF) protein is Uridine kinase.